The primary structure comprises 295 residues: Protoheme IX farnesyltransferase 2 (295 aa).

A run of 9 helical transmembrane segments spans residues 9–29, 36–56, 83–103, 108–128, 135–155, 163–183, 209–229, 230–250, and 264–284; these read ITKP…FFLA, FALF…GCVF, LPLA…LLYV, LSAF…SLWL, GTLV…CAVS, VTLL…IAIF, IVLY…GGYA, GLGY…MAWG, and VFGF…VDSQ.

The protein belongs to the UbiA prenyltransferase family. Protoheme IX farnesyltransferase subfamily.

The protein resides in the cell inner membrane. It carries out the reaction heme b + (2E,6E)-farnesyl diphosphate + H2O = Fe(II)-heme o + diphosphate. The protein operates within porphyrin-containing compound metabolism; heme O biosynthesis; heme O from protoheme: step 1/1. Its function is as follows. Converts heme B (protoheme IX) to heme O by substitution of the vinyl group on carbon 2 of heme B porphyrin ring with a hydroxyethyl farnesyl side group. In Pseudomonas putida (strain GB-1), this protein is Protoheme IX farnesyltransferase 2.